The sequence spans 984 residues: UPF0592 protein YDL073W (984 aa).

A disordered region spans residues 675–712 (KNHKIMDGYEGGQENEDNDEDSEDSGSHKNKRKEGNSS). Positions 687-698 (QENEDNDEDSED) are enriched in acidic residues.

Belongs to the UPF0592 family.

This is UPF0592 protein YDL073W from Saccharomyces cerevisiae (strain ATCC 204508 / S288c) (Baker's yeast).